The following is a 237-amino-acid chain: NAD-dependent protein deacetylase (237 aa).

The Deacetylase sirtuin-type domain occupies 1-237; it reads MFTTSLRQAQ…LVETNRALQK (237 aa). 7 residues coordinate NAD(+): Ala-18, Thr-22, Phe-29, Arg-30, Gln-95, Asp-98, and His-113. Phe-29 contacts nicotinamide. Asp-98 is a binding site for nicotinamide. The active-site Proton acceptor is His-113. Zn(2+) contacts are provided by Cys-121, Cys-124, Cys-140, and Cys-142. The NAD(+) site is built by Ser-180, Ser-181, Asn-205, and Ile-224.

The protein belongs to the sirtuin family. Class U subfamily. Requires Zn(2+) as cofactor.

It localises to the cytoplasm. It carries out the reaction N(6)-acetyl-L-lysyl-[protein] + NAD(+) + H2O = 2''-O-acetyl-ADP-D-ribose + nicotinamide + L-lysyl-[protein]. Its function is as follows. NAD-dependent protein deacetylase which modulates the activities of several enzymes which are inactive in their acetylated form. This Shouchella clausii (strain KSM-K16) (Alkalihalobacillus clausii) protein is NAD-dependent protein deacetylase.